The chain runs to 289 residues: 4-diphosphocytidyl-2-C-methyl-D-erythritol kinase (289 aa).

The active site involves lysine 10. 94–104 (PVAAGLAGGSS) lines the ATP pocket. The active site involves aspartate 136.

It belongs to the GHMP kinase family. IspE subfamily.

It carries out the reaction 4-CDP-2-C-methyl-D-erythritol + ATP = 4-CDP-2-C-methyl-D-erythritol 2-phosphate + ADP + H(+). The protein operates within isoprenoid biosynthesis; isopentenyl diphosphate biosynthesis via DXP pathway; isopentenyl diphosphate from 1-deoxy-D-xylulose 5-phosphate: step 3/6. Its function is as follows. Catalyzes the phosphorylation of the position 2 hydroxy group of 4-diphosphocytidyl-2C-methyl-D-erythritol. This Bacillus velezensis (strain DSM 23117 / BGSC 10A6 / LMG 26770 / FZB42) (Bacillus amyloliquefaciens subsp. plantarum) protein is 4-diphosphocytidyl-2-C-methyl-D-erythritol kinase.